The primary structure comprises 393 residues: Nucleosome assembly protein 1-like 1 (393 aa).

The span at 1–10 (MANIDNKEQT) shows a compositional bias: basic and acidic residues. Disordered regions lie at residues 1 to 36 (MANI…NSKA) and 132 to 165 (ECEW…KEDP). Composition is skewed to acidic residues over residues 11–30 (ELDQ…EAGE) and 132–144 (ECEW…EDIS). Positions 126–151 (YEPTEEECEWKVDEEEDISGDLKDKA) match the NAP1L motif motif. A compositionally biased stretch (basic and acidic residues) spans 145–165 (GDLKDKAKLEEEKKDEEKEDP). The Nuclear localization signal signature appears at 274-280 (IKKKQKH). Positions 347–378 (AIEDDDDDYDEEGEEADDEEGEEEADEDNDPD) are enriched in acidic residues. The interval 347-393 (AIEDDDDDYDEEGEEADDEEGEEEADEDNDPDYEPKKDQNPAECKQQ) is disordered. The segment covering 379-393 (YEPKKDQNPAECKQQ) has biased composition (basic and acidic residues).

It belongs to the nucleosome assembly protein (NAP) family. In terms of assembly, forms homomultimers. Interacts with histone B4. Interacts with the B-type cyclins ccnb1 and ccnb2. In terms of processing, phosphorylated by cyclin B-cdc2 kinase complexes.

The protein resides in the cytoplasm. It localises to the nucleus. Its function is as follows. Acts as a chaperone for the linker histone to facilitate deposition of histone B4 onto linker DNA. Required for both remodeling of sperm chromatin into nucleosomes, and linker histone binding to nucleosome core dimers. Plays a role in tissue-specific gene regulation. Required for primitive hemopoiesis, acting upstream of tal1/scl. The polypeptide is Nucleosome assembly protein 1-like 1 (Xenopus tropicalis (Western clawed frog)).